The primary structure comprises 379 residues: Lactosylceramide 1,3-N-acetyl-beta-D-glucosaminyltransferase A (379 aa).

The Cytoplasmic segment spans residues 1–12 (MFMNCRRVKKWH). The chain crosses the membrane as a helical; Signal-anchor for type II membrane protein span at residues 13 to 30 (FLQLLSMCCVMSVLMVCW). Topologically, residues 31-379 (EHVDHHVVSH…NTYSCMAAFT (349 aa)) are lumenal. N-linked (GlcNAc...) asparagine glycans are attached at residues Asn-57, Asn-113, Asn-168, and Asn-277.

Belongs to the glycosyltransferase 31 family.

The protein resides in the golgi apparatus membrane. The catalysed reaction is a beta-D-Gal-(1-&gt;4)-beta-D-Glc-(1&lt;-&gt;1)-Cer(d18:1(4E)) + UDP-N-acetyl-alpha-D-glucosamine = a beta-D-GlcNAc-(1-&gt;3)-beta-D-Gal-(1-&gt;4)-beta-D-Glc-(1&lt;-&gt;1)-Cer(d18:1(4E)) + UDP + H(+). The enzyme catalyses a neolactoside nLc4Cer(d18:1(4E)) + UDP-N-acetyl-alpha-D-glucosamine = a neolactoside IV(3)-beta-GlcNAc-nLc4Cer(d18:1(4E)) + UDP + H(+). It functions in the pathway protein modification; protein glycosylation. In terms of biological role, beta-1,3-N-acetylglucosaminyltransferase that plays a key role in the synthesis of lacto- or neolacto-series carbohydrate chains on glycolipids. This chain is Lactosylceramide 1,3-N-acetyl-beta-D-glucosaminyltransferase A (b3gnt5a), found in Danio rerio (Zebrafish).